Consider the following 435-residue polypeptide: Transcriptional enhancer factor TEF-5 (435 aa).

Residues 1-12 (MASNSWNASSSP) are compositionally biased toward polar residues. Residues 1–34 (MASNSWNASSSPGEAREDGPEGLDKGLDNDAEGV) are disordered. A2 is subject to N-acetylalanine. Positions 14 to 28 (EAREDGPEGLDKGLD) are enriched in basic and acidic residues. Positions 28–104 (DNDAEGVWSP…QVLARKKVRE (77 aa)) form a DNA-binding region, TEA. S148 carries the phosphoserine modification. Positions 173-435 (GPSQDIKPFA…QHHVYKLVKD (263 aa)) are transcriptional activation.

In terms of assembly, interacts with YAP1 and WWTR1/TAZ. Preferentially expressed in the placenta.

It is found in the nucleus. Transcription factor which plays a key role in the Hippo signaling pathway, a pathway involved in organ size control and tumor suppression by restricting proliferation and promoting apoptosis. The core of this pathway is composed of a kinase cascade wherein MST1/MST2, in complex with its regulatory protein SAV1, phosphorylates and activates LATS1/2 in complex with its regulatory protein MOB1, which in turn phosphorylates and inactivates YAP1 oncoprotein and WWTR1/TAZ. Acts by mediating gene expression of YAP1 and WWTR1/TAZ, thereby regulating cell proliferation, migration and epithelial mesenchymal transition (EMT) induction. Binds to multiple functional elements of the human chorionic somatomammotropin-B gene enhancer. This chain is Transcriptional enhancer factor TEF-5 (TEAD3), found in Homo sapiens (Human).